A 331-amino-acid polypeptide reads, in one-letter code: DNA-directed RNA polymerase subunit alpha (331 aa).

The segment at 1–233 (MVREEIAVST…DLFLPFLHAE (233 aa)) is alpha N-terminal domain (alpha-NTD). An alpha C-terminal domain (alpha-CTD) region spans residues 268–331 (ALKRVFIDQS…GILQKRFAID (64 aa)).

This sequence belongs to the RNA polymerase alpha chain family. As to quaternary structure, in plastids the minimal PEP RNA polymerase catalytic core is composed of four subunits: alpha, beta, beta', and beta''. When a (nuclear-encoded) sigma factor is associated with the core the holoenzyme is formed, which can initiate transcription.

It localises to the plastid. It is found in the chloroplast. The catalysed reaction is RNA(n) + a ribonucleoside 5'-triphosphate = RNA(n+1) + diphosphate. Its function is as follows. DNA-dependent RNA polymerase catalyzes the transcription of DNA into RNA using the four ribonucleoside triphosphates as substrates. In Illicium oligandrum (Star anise), this protein is DNA-directed RNA polymerase subunit alpha.